We begin with the raw amino-acid sequence, 448 residues long: Glutamyl-tRNA reductase (448 aa).

Residues 49–52, Ser-109, 114–116, and Gln-120 contribute to the substrate site; these read TCNR and ETQ. Cys-50 functions as the Nucleophile in the catalytic mechanism. 189–194 contacts NADP(+); the sequence is GAGEMS.

It belongs to the glutamyl-tRNA reductase family. Homodimer.

It catalyses the reaction (S)-4-amino-5-oxopentanoate + tRNA(Glu) + NADP(+) = L-glutamyl-tRNA(Glu) + NADPH + H(+). It participates in porphyrin-containing compound metabolism; protoporphyrin-IX biosynthesis; 5-aminolevulinate from L-glutamyl-tRNA(Glu): step 1/2. Catalyzes the NADPH-dependent reduction of glutamyl-tRNA(Glu) to glutamate 1-semialdehyde (GSA). This is Glutamyl-tRNA reductase from Staphylococcus aureus (strain MRSA252).